The chain runs to 101 residues: RNA-binding protein Hfq (101 aa).

Positions 9–68 (DPFLNALRRERVPVSIYLVNGIKLQGQVESFDQFVILLKNTVSQMVYKHAISTVVPSRPV) constitute a Sm domain. The disordered stretch occupies residues 63-101 (VPSRPVSHHSNNPSGSTNNYHGSNPSAPQQPQQDSDDAE). Positions 70-86 (HHSNNPSGSTNNYHGSN) are enriched in polar residues.

Belongs to the Hfq family. As to quaternary structure, homohexamer.

In terms of biological role, RNA chaperone that binds small regulatory RNA (sRNAs) and mRNAs to facilitate mRNA translational regulation in response to envelope stress, environmental stress and changes in metabolite concentrations. Also binds with high specificity to tRNAs. Positively regulates the expression of the yst gene for heat-stable enterotoxin (Y-ST). This is RNA-binding protein Hfq from Yersinia enterocolitica.